Consider the following 208-residue polypeptide: ATP-dependent Clp protease proteolytic subunit (208 aa).

The active-site Nucleophile is the S107. The active site involves H132.

The protein belongs to the peptidase S14 family. In terms of assembly, fourteen ClpP subunits assemble into 2 heptameric rings which stack back to back to give a disk-like structure with a central cavity, resembling the structure of eukaryotic proteasomes.

The protein localises to the cytoplasm. It catalyses the reaction Hydrolysis of proteins to small peptides in the presence of ATP and magnesium. alpha-casein is the usual test substrate. In the absence of ATP, only oligopeptides shorter than five residues are hydrolyzed (such as succinyl-Leu-Tyr-|-NHMec, and Leu-Tyr-Leu-|-Tyr-Trp, in which cleavage of the -Tyr-|-Leu- and -Tyr-|-Trp bonds also occurs).. In terms of biological role, cleaves peptides in various proteins in a process that requires ATP hydrolysis. Has a chymotrypsin-like activity. Plays a major role in the degradation of misfolded proteins. This Methylorubrum populi (strain ATCC BAA-705 / NCIMB 13946 / BJ001) (Methylobacterium populi) protein is ATP-dependent Clp protease proteolytic subunit.